A 920-amino-acid chain; its full sequence is Phosphoenolpyruvate carboxylase (920 aa).

Catalysis depends on residues histidine 138 and lysine 583.

Belongs to the PEPCase type 1 family. It depends on Mg(2+) as a cofactor.

The catalysed reaction is oxaloacetate + phosphate = phosphoenolpyruvate + hydrogencarbonate. Functionally, forms oxaloacetate, a four-carbon dicarboxylic acid source for the tricarboxylic acid cycle. This is Phosphoenolpyruvate carboxylase from Streptococcus pyogenes serotype M3 (strain ATCC BAA-595 / MGAS315).